Consider the following 291-residue polypeptide: Syntaxin-1A homolog (291 aa).

The disordered stretch occupies residues 1–24; sequence MTKDRLSALKAAQSEDEQDDDMHM. The Cytoplasmic segment spans residues 1-266; the sequence is MTKDRLSALK…QYQSKARRKK (266 aa). A coiled-coil region spans residues 69–95; the sequence is NDQKTKEELDELMAVIKRAANKVRGKL. The region spanning 193-255 is the t-SNARE coiled-coil homology domain; the sequence is LADIEARHND…DRAVADTKKA (63 aa). A helical; Anchor for type IV membrane protein membrane pass occupies residues 267-287; it reads ICILVTGVILITGLIIFILFY. Residues 288–291 are Extracellular-facing; that stretch reads AKVL.

This sequence belongs to the syntaxin family. Interacts (via N-terminus, in open or in closed conformation) with unc-18; the interaction is direct. Interaction in open conformation with unc-18 promotes synaptic vesicle docking and tethering. Interaction via N-terminus with unc-18 mediates the secretion of the neurotransmitter acetylcholine from cholinergic motor neurons. Interaction with unc-18 is reduced in the presence of unc-13. In terms of tissue distribution, expressed throughout the head ganglion, nerve ring, ventral cord, dorsal cord, intestine, vulva and spermatheca.

The protein resides in the cell membrane. It localises to the cell projection. It is found in the axon. Its subcellular location is the dendrite. The protein localises to the perikaryon. Its function is as follows. Plays a critical role in several secretory processes, including cuticle secretion and neurotransmitter release, and probably assists in neuronal membrane maturation or the final stages of neuronal differentiation. Plays a role in synaptic vesicle docking and tethering through its association with unc-18. Through binding to unc-18 mediates the release of the neurotransmitter acetylcholine from cholinergic motor neurons, and thereby promotes locomotory behaviors. Essential for embryonic viability and development. Has a role in dauer formation and adult life span. Required for locomotion. Probably by regulating neuronal transmission downstream of lin-3 and receptor lin-23 and phospholipase plc-3 and upstream of innexin unc-7 and egl-4/PKG in ALA neurons, involved in the decrease in pharyngeal pumping during the quiescent state that precedes each larval molt. The chain is Syntaxin-1A homolog from Caenorhabditis elegans.